Here is a 133-residue protein sequence, read N- to C-terminus: Fatty acid-binding protein, heart (133 aa).

Ala-2 is subject to N-acetylalanine. A Phosphothreonine modification is found at Thr-8. Residue Tyr-20 is modified to Phosphotyrosine; by Tyr-kinases. Residue Ser-23 is modified to Phosphoserine. At Thr-30 the chain carries Phosphothreonine. Ser-83 bears the Phosphoserine mark. 127 to 129 (RTY) serves as a coordination point for (9Z)-octadecenoate. 127-129 (RTY) is a hexadecanoate binding site. 127–129 (RTY) contributes to the octadecanoate binding site.

It belongs to the calycin superfamily. Fatty-acid binding protein (FABP) family.

It localises to the cytoplasm. Its function is as follows. FABPs are thought to play a role in the intracellular transport of long-chain fatty acids and their acyl-CoA esters. In Mus musculus (Mouse), this protein is Fatty acid-binding protein, heart (Fabp3).